Consider the following 377-residue polypeptide: Nitric oxide reductase FlRd-NAD(+) reductase (377 aa).

The protein belongs to the FAD-dependent oxidoreductase family. Requires FAD as cofactor.

The protein resides in the cytoplasm. The enzyme catalyses 2 reduced [nitric oxide reductase rubredoxin domain] + NAD(+) + H(+) = 2 oxidized [nitric oxide reductase rubredoxin domain] + NADH. It functions in the pathway nitrogen metabolism; nitric oxide reduction. Functionally, one of at least two accessory proteins for anaerobic nitric oxide (NO) reductase. Reduces the rubredoxin moiety of NO reductase. This chain is Nitric oxide reductase FlRd-NAD(+) reductase, found in Salmonella typhimurium (strain LT2 / SGSC1412 / ATCC 700720).